Here is a 193-residue protein sequence, read N- to C-terminus: Imidazoleglycerol-phosphate dehydratase (193 aa).

It belongs to the imidazoleglycerol-phosphate dehydratase family.

The protein localises to the cytoplasm. The enzyme catalyses D-erythro-1-(imidazol-4-yl)glycerol 3-phosphate = 3-(imidazol-4-yl)-2-oxopropyl phosphate + H2O. The protein operates within amino-acid biosynthesis; L-histidine biosynthesis; L-histidine from 5-phospho-alpha-D-ribose 1-diphosphate: step 6/9. The polypeptide is Imidazoleglycerol-phosphate dehydratase (Staphylococcus carnosus (strain TM300)).